Reading from the N-terminus, the 438-residue chain is ATP phosphoribosyltransferase regulatory subunit (438 aa).

It belongs to the class-II aminoacyl-tRNA synthetase family. HisZ subfamily. Heteromultimer composed of HisG and HisZ subunits.

The protein resides in the cytoplasm. It functions in the pathway amino-acid biosynthesis; L-histidine biosynthesis; L-histidine from 5-phospho-alpha-D-ribose 1-diphosphate: step 1/9. Functionally, required for the first step of histidine biosynthesis. May allow the feedback regulation of ATP phosphoribosyltransferase activity by histidine. The sequence is that of ATP phosphoribosyltransferase regulatory subunit from Geobacter sulfurreducens (strain ATCC 51573 / DSM 12127 / PCA).